The chain runs to 63 residues: Large ribosomal subunit protein bL32 (63 aa).

This sequence belongs to the bacterial ribosomal protein bL32 family.

This is Large ribosomal subunit protein bL32 from Acholeplasma laidlawii.